Here is a 195-residue protein sequence, read N- to C-terminus: Nucleoside triphosphate pyrophosphatase (195 aa).

Asp-70 (proton acceptor) is an active-site residue.

Belongs to the Maf family. A divalent metal cation is required as a cofactor.

It localises to the cytoplasm. It catalyses the reaction a ribonucleoside 5'-triphosphate + H2O = a ribonucleoside 5'-phosphate + diphosphate + H(+). It carries out the reaction a 2'-deoxyribonucleoside 5'-triphosphate + H2O = a 2'-deoxyribonucleoside 5'-phosphate + diphosphate + H(+). Its function is as follows. Nucleoside triphosphate pyrophosphatase. May have a dual role in cell division arrest and in preventing the incorporation of modified nucleotides into cellular nucleic acids. This is Nucleoside triphosphate pyrophosphatase from Synechocystis sp. (strain ATCC 27184 / PCC 6803 / Kazusa).